The primary structure comprises 351 residues: AT-hook motif nuclear-localized protein 10 (351 aa).

A disordered region spans residues 1–151; sequence MSGSETGLMA…RPPGSSSKRL (151 aa). Low complexity predominate over residues 23–37; that stretch reads HQQQQHSQAQPQQSQ. Positions 60–77 are enriched in polar residues; that stretch reads SPPQQYQPNSAGENSVLN. The short motif at 97–105 is the Bipartite nuclear localization signal element; it reads KKRRGRPRK. 2 consecutive DNA-binding regions (a.T hook) follow at residues 97–109 and 138–149; these read KKRRGRPRKYGPD and KKRGRPPGSSSK. The PPC domain occupies 159 to 301; that stretch reads TGIGFTPHVL…QMGLSSPVLP (143 aa). 2 stretches are compositionally biased toward polar residues: residues 310 to 325 and 334 to 351; these read MTPSSPQSRGTMSESS and IHQSTGGPYNNTINMPWK. The disordered stretch occupies residues 310-351; sequence MTPSSPQSRGTMSESSCGGGHGSPIHQSTGGPYNNTINMPWK.

The protein localises to the nucleus. In terms of biological role, transcription factor that specifically binds AT-rich DNA sequences related to the nuclear matrix attachment regions (MARs). The protein is AT-hook motif nuclear-localized protein 10 of Arabidopsis thaliana (Mouse-ear cress).